The following is a 101-amino-acid chain: NADH-quinone oxidoreductase subunit K (101 aa).

Helical transmembrane passes span 4-24 (LSHF…GIFL), 30-50 (IVLL…FIAF), and 61-81 (VFVF…LAIL).

It belongs to the complex I subunit 4L family. In terms of assembly, NDH-1 is composed of 14 different subunits. Subunits NuoA, H, J, K, L, M, N constitute the membrane sector of the complex.

The protein localises to the cell inner membrane. It catalyses the reaction a quinone + NADH + 5 H(+)(in) = a quinol + NAD(+) + 4 H(+)(out). In terms of biological role, NDH-1 shuttles electrons from NADH, via FMN and iron-sulfur (Fe-S) centers, to quinones in the respiratory chain. The immediate electron acceptor for the enzyme in this species is believed to be ubiquinone. Couples the redox reaction to proton translocation (for every two electrons transferred, four hydrogen ions are translocated across the cytoplasmic membrane), and thus conserves the redox energy in a proton gradient. In Thiobacillus denitrificans (strain ATCC 25259 / T1), this protein is NADH-quinone oxidoreductase subunit K.